The following is a 100-amino-acid chain: uncharacterized protein (100 aa).

Positions 65 to 96 (PELSKNWEKLKKEIEQKHKEIQELISEFDNMF) form a coiled coil.

This is an uncharacterized protein from Acidianus filamentous virus 2 (isolate Italy/Pozzuoli) (AFV-2).